The chain runs to 228 residues: E3 ubiquitin-protein ligase RNF114 (228 aa).

The segment at 29–68 adopts an RING-type zinc-finger fold; that stretch reads CPVCLEVYEKPVQVPCGHVFCSACLQECLKPKKPVCGVCR. Residues Cys91 and Cys94 each coordinate Zn(2+). The segment at 91–110 adopts a C2HC RNF-type zinc-finger fold; the sequence is CHGCRKNFFLSKIRSHVATC. An N6-acetyllysine modification is found at Lys102. Zn(2+) contacts are provided by His106 and Cys110. At Lys112 the chain carries N6-acetyllysine.

As to quaternary structure, interacts with XAF1, the interaction increases XAF1 stability and proapoptotic effects, and may regulate IFN signaling. Post-translationally, autoubiquitinated. Polyubiquitinated in the presence of E2 enzymes UBE2D1, UBE2D2 and UBE2D3, but only monoubiquitinated in the presence of UBE2E1. In terms of tissue distribution, expressed in numerous tissues, including skin, CD4 lymphocytes and dendritic cells. Highest levels in testis.

Its subcellular location is the cytoplasm. The protein resides in the nucleus. It catalyses the reaction S-ubiquitinyl-[E2 ubiquitin-conjugating enzyme]-L-cysteine + [acceptor protein]-L-lysine = [E2 ubiquitin-conjugating enzyme]-L-cysteine + N(6)-ubiquitinyl-[acceptor protein]-L-lysine.. It functions in the pathway protein modification; protein ubiquitination. Its function is as follows. E3 ubiquitin-protein ligase that promotes the ubiquitination of various substrates. In turn, participates in the regulation of many biological processes including cell cycle, apoptosis, osteoclastogenesis as well as innate or adaptive immunity. Acts as a negative regulator of NF-kappa-B-dependent transcription by promoting the ubiquitination and stabilization of the NF-kappa-B inhibitor TNFAIP3. May promote the ubiquitination of TRAF6 as well. Also acts as a negative regulator of T-cell activation. Inhibits cellular dsRNA responses and interferon production by targeting MAVS component for proteasomal degradation. Ubiquitinates the CDK inhibitor CDKN1A leading to its degradationand probably also CDKN1B and CDKN1C. This activity stimulates cell cycle G1-to-S phase transition and suppresses cellular senescence. May play a role in spermatogenesis. In Homo sapiens (Human), this protein is E3 ubiquitin-protein ligase RNF114 (RNF114).